The chain runs to 1044 residues: Pre-mRNA-splicing factor ATP-dependent RNA helicase DEAH1 (1044 aa).

The disordered stretch occupies residues 106–206 (EVVVEKKSSV…TLSKKEKEEA (101 aa)). Positions 108–121 (VVEKKSSVSESRKS) are enriched in basic and acidic residues. Over residues 122 to 132 (DKGKKRFRKKS) the composition is skewed to basic residues. Phosphoserine occurs at positions 135 and 138. Over residues 157 to 166 (EEDDGSESEE) the composition is skewed to acidic residues. Residues 167–206 (ERVRDQKEREELEQHLKDRDTARTRKLTEQTLSKKEKEEA) are compositionally biased toward basic and acidic residues. One can recognise a Helicase ATP-binding domain in the interval 414–577 (LKAVEEHQVL…FDTAPIFSFP (164 aa)). 427–434 (GDTGSGKT) lines the ATP pocket. The short motif at 524–527 (DEAH) is the DEAH box element. Residues 600 to 775 (IVTILTIHVR…SVVLALKSLG (176 aa)) enclose the Helicase C-terminal domain.

This sequence belongs to the DEAD box helicase family. DEAH subfamily. PRP2 sub-subfamily. Widely expressed.

It carries out the reaction ATP + H2O = ADP + phosphate + H(+). Involved in pre-mRNA splicing. In Arabidopsis thaliana (Mouse-ear cress), this protein is Pre-mRNA-splicing factor ATP-dependent RNA helicase DEAH1.